We begin with the raw amino-acid sequence, 297 residues long: Syntaxin-4 (297 aa).

Residues 1–12 are compositionally biased toward basic and acidic residues; the sequence is MRDRTHELRQGD. Residues 1–21 are disordered; the sequence is MRDRTHELRQGDDSSDDEDKE. Residues 1-275 are Cytoplasmic-facing; sequence MRDRTHELRQ…QKKARKKKVF (275 aa). 2 positions are modified to phosphoserine: serine 14 and serine 15. Threonine 31 carries the post-translational modification Phosphothreonine. Phosphoserine occurs at positions 36, 117, 208, and 248. A coiled-coil region spans residues 43 to 163; it reads QKVRTIRQTI…ERIRRQLKIT (121 aa). The t-SNARE coiled-coil homology domain occupies 200-262; the sequence is LNEISARHSE…ERGQEHVKVA (63 aa). Residues 276–296 form a helical; Anchor for type IV membrane protein membrane-spanning segment; sequence IAICLSITVLILVVIIVISTL. A topological domain (extracellular) is located at residue valine 297.

It belongs to the syntaxin family. In terms of assembly, component of the SNARE complex composed of STX4, SNAP23 and VAMP7 that interacts with SYT7 during lysosomal exocytosis. Found in a complex with VAMP8 and SNAP23. Detected in a complex with SNAP23 and STXBP4. Interacts with VAMP2. Interacts with SNAP23 and SNAPIN. Interacts with LLGL1. Interacts (via C-terminus) with CENPF. Interacts with DOC2B. Interacts with STXBP6. Interacts with STXBP3; excludes interaction with DOC2B and SNAP25. Interacts with STXBP4; excludes interaction with VAMP2. Interacts with STXBP5L.

The protein localises to the cell membrane. It is found in the cell projection. The protein resides in the neuron projection. Its subcellular location is the stereocilium. Its function is as follows. Plasma membrane t-SNARE that mediates docking of transport vesicles. Necessary for the translocation of SLC2A4 from intracellular vesicles to the plasma membrane. In neurons, recruited at neurite tips to membrane domains rich in the phospholipid 1-oleoyl-2-palmitoyl-PC (OPPC) which promotes neurite tip surface expression of the dopamine transporter SLC6A3/DAT by facilitating fusion of SLC6A3-containing transport vesicles with the plasma membrane. Together with STXB3 and VAMP2, may also play a role in docking/fusion of intracellular GLUT4-containing vesicles with the cell surface in adipocytes and in docking of synaptic vesicles at presynaptic active zones. Required for normal hearing. The polypeptide is Syntaxin-4 (STX4) (Bos taurus (Bovine)).